We begin with the raw amino-acid sequence, 1354 residues long: Rho-associated protein kinase 1 (1354 aa).

At Ser2 the chain carries N-acetylserine. Positions 76-338 (YEVVKVIGRG…VEEIKRHLFF (263 aa)) constitute a Protein kinase domain. ATP contacts are provided by residues 82-90 (IGRGAFGEV) and Lys105. Catalysis depends on Asp198, which acts as the Proton acceptor. The AGC-kinase C-terminal domain maps to 341–409 (DQWAWETLRD…YSNRRYLPSA (69 aa)). The interval 368-727 (FDDLEEDKGD…KKLKEEREAR (360 aa)) is interaction with FHOD1. Residues 422-692 (KSLQESLQKT…RLEQEVNEHK (271 aa)) adopt a coiled-coil conformation. In terms of domain architecture, REM-1 spans 479-556 (SAVSQIEKEK…LEEANDLLRT (78 aa)). The SHROOM3 binding stretch occupies residues 707-946 (EAKSVAMCEM…TVSRLEETNS (240 aa)). The RhoBD domain maps to 949–1015 (TKDIEMLRKE…LAEIMNRKDF (67 aa)). The tract at residues 998–1010 (LKTQAVNKLAEIM) is RHOA binding. Residues 1011 to 1102 (NRKDFKIDRK…KLLDLSDSTS (92 aa)) adopt a coiled-coil conformation. 2 positions are modified to phosphoserine: Ser1105 and Ser1108. Positions 1115 to 1354 (NLPESRIEGW…VVKNTSGKTS (240 aa)) are auto-inhibitory. One can recognise a PH domain in the interval 1118 to 1317 (ESRIEGWLSV…WVTHLVKKIP (200 aa)). The Phorbol-ester/DAG-type zinc-finger motif lies at 1228–1283 (GHEFIPTLYHFPANCEACAKPLWHVFKPPPALECRRCHVKCHRDHLDKKEDLISPC). Ser1328 carries the phosphoserine modification. Residues 1333–1354 (STRSTANQSFRKVVKNTSGKTS) are disordered.

It belongs to the protein kinase superfamily. AGC Ser/Thr protein kinase family. Homodimer. Interacts with RHOA (activated by GTP), RHOB, RHOC, GEM, MYLC2B, RHOE, PPP1R12A, LIMK1, LIMK2, TSG101, CHORDC1, DAPK3, PFN1 and JIP3. Interacts with FHOD1 in a Src-dependent manner. Interacts with PTEN. Interacts with ITGB1BP1 (via N-terminus and PTB domain). Interacts with SHROOM3. Requires Mg(2+) as cofactor. Post-translationally, autophosphorylated on serine and threonine residues. In terms of processing, cleaved by caspase-3 during apoptosis. This leads to constitutive activation of the kinase and membrane blebbing. Highly expressed in brain, heart, lung, liver, stomach, spleen, kidney, testis, muscle, embryo and placenta.

The protein resides in the cytoplasm. It is found in the cytoskeleton. It localises to the microtubule organizing center. The protein localises to the centrosome. Its subcellular location is the centriole. The protein resides in the golgi apparatus membrane. It is found in the cell projection. It localises to the bleb. The protein localises to the cell membrane. Its subcellular location is the lamellipodium. The protein resides in the ruffle. The enzyme catalyses L-seryl-[protein] + ATP = O-phospho-L-seryl-[protein] + ADP + H(+). It catalyses the reaction L-threonyl-[protein] + ATP = O-phospho-L-threonyl-[protein] + ADP + H(+). Activated by RHOA binding. Inhibited by Y-27632. Its function is as follows. Protein kinase which is a key regulator of the actin cytoskeleton and cell polarity. Involved in regulation of smooth muscle contraction, actin cytoskeleton organization, stress fiber and focal adhesion formation, neurite retraction, cell adhesion and motility via phosphorylation of DAPK3, GFAP, LIMK1, LIMK2, MYL9/MLC2, TPPP, PFN1 and PPP1R12A. Phosphorylates FHOD1 and acts synergistically with it to promote SRC-dependent non-apoptotic plasma membrane blebbing. Phosphorylates JIP3 and regulates the recruitment of JNK to JIP3 upon UVB-induced stress. Acts as a suppressor of inflammatory cell migration by regulating PTEN phosphorylation and stability. Acts as a negative regulator of VEGF-induced angiogenic endothelial cell activation. Required for centrosome positioning and centrosome-dependent exit from mitosis. Plays a role in terminal erythroid differentiation. Inhibits podocyte motility via regulation of actin cytoskeletal dynamics and phosphorylation of CFL1. Promotes keratinocyte terminal differentiation. Involved in osteoblast compaction through the fibronectin fibrillogenesis cell-mediated matrix assembly process, essential for osteoblast mineralization. May regulate closure of the eyelids and ventral body wall by inducing the assembly of actomyosin bundles. This chain is Rho-associated protein kinase 1 (Rock1), found in Mus musculus (Mouse).